Consider the following 512-residue polypeptide: Alpha-amylase 1 (512 aa).

The signal sequence occupies residues M1–A25. Cysteines 66 and 74 form a disulfide. Position 119 (W119) interacts with substrate. Position 157 (N157) interacts with Ca(2+). Substrate is bound at residue H158. Residues C186 and C200 are joined by a disulfide bond. Residues E198 and D211 each coordinate Ca(2+). Residue N233 is glycosylated (N-linked (GlcNAc...) asparagine). Substrate is bound at residue R240. Positions 242, 246, and 266 each coordinate Ca(2+). The active-site Nucleophile is the D242. A substrate-binding site is contributed by K245 to H246. The active-site Proton donor is the E266. G270 lines the substrate pocket. A disulfide bridge links C276 with C319. Substrate-binding residues include D333 and R380. C475 and C510 are disulfide-bonded.

The protein belongs to the glycosyl hydrolase 13 family. Requires Ca(2+) as cofactor.

The protein resides in the secreted. The enzyme catalyses Endohydrolysis of (1-&gt;4)-alpha-D-glucosidic linkages in polysaccharides containing three or more (1-&gt;4)-alpha-linked D-glucose units.. Alpha-amylase expression underlies catabolite repression by glucose. This chain is Alpha-amylase 1 (AMY1), found in Schwanniomyces occidentalis (Yeast).